The chain runs to 74 residues: U3-agatoxin-Ao1g (74 aa).

Positions 1–20 are cleaved as a signal peptide; it reads MRAIISLLLISTMVFGVIEA. Positions 21 to 34 are excised as a propeptide; that stretch reads VSVEEGLKIFEGER. 4 disulfide bridges follow: Cys-37–Cys-53, Cys-44–Cys-58, Cys-52–Cys-68, and Cys-60–Cys-66. Asn-72 bears the Asparagine amide mark.

The protein belongs to the neurotoxin 07 (Beta/delta-agtx) family. 03 (aga-4) subfamily. Aga sub-subfamily. Expressed by the venom gland.

The protein localises to the secreted. Functionally, insecticidal neurotoxin that modulates the insect Nav channel (DmNaV1/tipE (para/tipE)) in a unique manner, with both the activation and inactivation processes being affected. The voltage dependence of activation is shifted toward more hyperpolarized potentials (analogous to site 4 toxins) and a non-inactivating persistent sodium current is induced (site 3-like action). Interestingly, both effects take place in a voltage-dependent manner, producing a bell-shaped curve between -80 and 0 mV. The protein is U3-agatoxin-Ao1g of Agelena orientalis (Funnel-web spider).